Reading from the N-terminus, the 156-residue chain is Small ribosomal subunit protein uS7 (156 aa).

Belongs to the universal ribosomal protein uS7 family. Part of the 30S ribosomal subunit. Contacts proteins S9 and S11.

Its function is as follows. One of the primary rRNA binding proteins, it binds directly to 16S rRNA where it nucleates assembly of the head domain of the 30S subunit. Is located at the subunit interface close to the decoding center, probably blocks exit of the E-site tRNA. The sequence is that of Small ribosomal subunit protein uS7 from Frankia casuarinae (strain DSM 45818 / CECT 9043 / HFP020203 / CcI3).